The primary structure comprises 199 residues: Nicotinamide riboside kinase 1 (199 aa).

10 to 18 contributes to the ATP binding site; sequence GVTNSGKTT. Residues Thr-17 and Asp-36 each contribute to the Mg(2+) site. Asp-36 serves as the catalytic Proton acceptor. Substrate contacts are provided by residues 36–39 and 55–56; these read DDFF and YD. Arg-128 contacts ATP. Residues Arg-129 and 134–135 contribute to the substrate site; that span reads YQ. ATP contacts are provided by residues 132-134 and 172-174; these read RVY and KSE.

This sequence belongs to the uridine kinase family. NRK subfamily. In terms of assembly, monomer.

The enzyme catalyses beta-nicotinamide D-riboside + ATP = beta-nicotinamide D-ribonucleotide + ADP + H(+). The catalysed reaction is beta-D-ribosylnicotinate + ATP = nicotinate beta-D-ribonucleotide + ADP + H(+). Its pathway is cofactor biosynthesis; NAD(+) biosynthesis. Its function is as follows. Catalyzes the phosphorylation of nicotinamide riboside (NR) and nicotinic acid riboside (NaR) to form nicotinamide mononucleotide (NMN) and nicotinic acid mononucleotide (NaMN). The enzyme also phosphorylates the antitumor drugs tiazofurin and 3-deazaguanosine. The sequence is that of Nicotinamide riboside kinase 1 (NMRK1) from Homo sapiens (Human).